Reading from the N-terminus, the 685-residue chain is UvrABC system protein B (685 aa).

The Helicase ATP-binding domain maps to 39-420; it reads EGIGDGLMYQ…TYEAEHQGQV (382 aa). Position 52-59 (52-59) interacts with ATP; sequence GVTGSGKT. The short motif at 105–128 is the Beta-hairpin element; that stretch reads YYDYYQPEAYVPSRDLFIEKDSSI. Residues 443-596 enclose the Helicase C-terminal domain; sequence QVDDLLSEAK…QIAFNQANGI (154 aa). The UVR domain occupies 640-675; it reads AKSIRKLEKEMQEHARNLEFEKAAAARDELFRLRQR.

It belongs to the UvrB family. Forms a heterotetramer with UvrA during the search for lesions. Interacts with UvrC in an incision complex.

The protein resides in the cytoplasm. The UvrABC repair system catalyzes the recognition and processing of DNA lesions. A damage recognition complex composed of 2 UvrA and 2 UvrB subunits scans DNA for abnormalities. Upon binding of the UvrA(2)B(2) complex to a putative damaged site, the DNA wraps around one UvrB monomer. DNA wrap is dependent on ATP binding by UvrB and probably causes local melting of the DNA helix, facilitating insertion of UvrB beta-hairpin between the DNA strands. Then UvrB probes one DNA strand for the presence of a lesion. If a lesion is found the UvrA subunits dissociate and the UvrB-DNA preincision complex is formed. This complex is subsequently bound by UvrC and the second UvrB is released. If no lesion is found, the DNA wraps around the other UvrB subunit that will check the other stand for damage. The protein is UvrABC system protein B of Aromatoleum aromaticum (strain DSM 19018 / LMG 30748 / EbN1) (Azoarcus sp. (strain EbN1)).